The sequence spans 407 residues: Serine hydroxymethyltransferase (407 aa).

Residues Leu-120 and 124 to 126 each bind (6S)-5,6,7,8-tetrahydrofolate; that span reads GHL. An N6-(pyridoxal phosphate)lysine modification is found at Lys-229.

Belongs to the SHMT family. As to quaternary structure, homodimer. Requires pyridoxal 5'-phosphate as cofactor.

Its subcellular location is the cytoplasm. It catalyses the reaction (6R)-5,10-methylene-5,6,7,8-tetrahydrofolate + glycine + H2O = (6S)-5,6,7,8-tetrahydrofolate + L-serine. Its pathway is one-carbon metabolism; tetrahydrofolate interconversion. It participates in amino-acid biosynthesis; glycine biosynthesis; glycine from L-serine: step 1/1. Its function is as follows. Catalyzes the reversible interconversion of serine and glycine with tetrahydrofolate (THF) serving as the one-carbon carrier. This reaction serves as the major source of one-carbon groups required for the biosynthesis of purines, thymidylate, methionine, and other important biomolecules. Also exhibits THF-independent aldolase activity toward beta-hydroxyamino acids, producing glycine and aldehydes, via a retro-aldol mechanism. This is Serine hydroxymethyltransferase from Deinococcus deserti (strain DSM 17065 / CIP 109153 / LMG 22923 / VCD115).